The chain runs to 500 residues: L-arabinose isomerase (500 aa).

Mn(2+) contacts are provided by glutamate 306, glutamate 333, histidine 350, and histidine 450.

This sequence belongs to the arabinose isomerase family. In terms of assembly, homohexamer. It depends on Mn(2+) as a cofactor.

The catalysed reaction is beta-L-arabinopyranose = L-ribulose. It participates in carbohydrate degradation; L-arabinose degradation via L-ribulose; D-xylulose 5-phosphate from L-arabinose (bacterial route): step 1/3. Functionally, catalyzes the conversion of L-arabinose to L-ribulose. This Escherichia coli O139:H28 (strain E24377A / ETEC) protein is L-arabinose isomerase.